The following is a 144-amino-acid chain: UPF0299 membrane protein MS1271 (144 aa).

The next 4 membrane-spanning stretches (helical) occupy residues 5–25 (IFLFVRSLIILYLILFIGEGI), 28–48 (LIPIGIPGSIFGLLILFIGLT), 57–77 (VFFGASLLIRYMAVLFVPVSV), and 92–112 (SLLIPNIVSTCVTLLVIGFLG).

It belongs to the UPF0299 family.

It localises to the cell inner membrane. The sequence is that of UPF0299 membrane protein MS1271 from Mannheimia succiniciproducens (strain KCTC 0769BP / MBEL55E).